The chain runs to 285 residues: NADPH-dependent 7-cyano-7-deazaguanine reductase (285 aa).

80–82 (VES) is a substrate binding site. 82-83 (SK) lines the NADPH pocket. Cys191 (thioimide intermediate) is an active-site residue. The active-site Proton donor is the Asp198. Position 231 to 232 (231 to 232 (HE)) interacts with substrate. 260 to 261 (RG) lines the NADPH pocket.

The protein belongs to the GTP cyclohydrolase I family. QueF type 2 subfamily. Homodimer.

The protein resides in the cytoplasm. It catalyses the reaction 7-aminomethyl-7-carbaguanine + 2 NADP(+) = 7-cyano-7-deazaguanine + 2 NADPH + 3 H(+). Its pathway is tRNA modification; tRNA-queuosine biosynthesis. Catalyzes the NADPH-dependent reduction of 7-cyano-7-deazaguanine (preQ0) to 7-aminomethyl-7-deazaguanine (preQ1). This is NADPH-dependent 7-cyano-7-deazaguanine reductase from Psychrobacter cryohalolentis (strain ATCC BAA-1226 / DSM 17306 / VKM B-2378 / K5).